The sequence spans 149 residues: Nucleoside diphosphate kinase (149 aa).

6 residues coordinate ATP: Lys-9, Phe-57, Arg-85, Thr-91, Arg-102, and Asn-112. His-115 serves as the catalytic Pros-phosphohistidine intermediate.

It belongs to the NDK family. Homotetramer. Mg(2+) serves as cofactor.

The protein resides in the cytoplasm. It carries out the reaction a 2'-deoxyribonucleoside 5'-diphosphate + ATP = a 2'-deoxyribonucleoside 5'-triphosphate + ADP. The catalysed reaction is a ribonucleoside 5'-diphosphate + ATP = a ribonucleoside 5'-triphosphate + ADP. In terms of biological role, major role in the synthesis of nucleoside triphosphates other than ATP. The ATP gamma phosphate is transferred to the NDP beta phosphate via a ping-pong mechanism, using a phosphorylated active-site intermediate. In Crocosphaera subtropica (strain ATCC 51142 / BH68) (Cyanothece sp. (strain ATCC 51142)), this protein is Nucleoside diphosphate kinase.